Reading from the N-terminus, the 250-residue chain is 6-phosphogluconate dehydrogenase, decarboxylating (250 aa).

2 residues coordinate substrate: Lys-29 and Arg-56. At Lys-77 the chain carries N6-acetyllysine. Substrate is bound by residues Arg-214 and His-220. 245–248 (SSSY) is an NADP(+) binding site.

The protein belongs to the 6-phosphogluconate dehydrogenase family. As to quaternary structure, homodimer.

It is found in the cytoplasm. It carries out the reaction 6-phospho-D-gluconate + NADP(+) = D-ribulose 5-phosphate + CO2 + NADPH. Its pathway is carbohydrate degradation; pentose phosphate pathway; D-ribulose 5-phosphate from D-glucose 6-phosphate (oxidative stage): step 3/3. In terms of biological role, catalyzes the oxidative decarboxylation of 6-phosphogluconate to ribulose 5-phosphate and CO(2), with concomitant reduction of NADP to NADPH. The protein is 6-phosphogluconate dehydrogenase, decarboxylating (PGD) of Sus scrofa (Pig).